The primary structure comprises 352 residues: MVFRIASSPYTHNQRQTSRIMLLVLLAAVPGIAAQLWFFGWGTLVQILLASVSALLAEALVLKLRKQSVAATLKDNSALLTGLLLAVSIPPLAPWWMVVLGTVFAVIIAKQLYGGLGQNPFNPAMIGYVVLLISFPVQMTSWLPPHEIAVNILGFIDAIQVIFSGHTASGGDMNTLRLGIDGISQATPLDTFKTSVRAGHSVEQIMQYPIYSGILAGAGWQWVNLAWLAGGVWLLWQKAIRWHIPLSFLVTLALCATLGWLFSPETLAAPQIHLLSGATMLGAFFILTDPVTASTTNRGRLIFGALAGLLVWLIRSFGGYPDGVAFAVLLANITVPLIDYYTRPRVYGHRKG.

5 helical membrane passes run 20–40 (IMLL…WFFG), 42–62 (GTLV…ALVL), 78–109 (ALLT…VIIA), 123–143 (PAMI…TSWL), and 148–168 (IAVN…GHTA). Threonine 187 carries the post-translational modification FMN phosphoryl threonine. 5 helical membrane passes run 214–234 (ILAG…GVWL), 242–262 (WHIP…GWLF), 267–287 (LAAP…FFIL), 301–321 (LIFG…GGYP), and 322–342 (DGVA…DYYT).

Belongs to the NqrB/RnfD family. The complex is composed of six subunits: RsxA, RsxB, RsxC, RsxD, RsxE and RsxG. FMN serves as cofactor.

The protein localises to the cell inner membrane. Part of a membrane-bound complex that couples electron transfer with translocation of ions across the membrane. Required to maintain the reduced state of SoxR. The chain is Ion-translocating oxidoreductase complex subunit D from Shigella dysenteriae serotype 1 (strain Sd197).